The following is a 67-amino-acid chain: Large ribosomal subunit protein bL31 (67 aa).

Zn(2+) is bound by residues Cys-16, Cys-18, Cys-36, and Cys-39.

This sequence belongs to the bacterial ribosomal protein bL31 family. Type A subfamily. In terms of assembly, part of the 50S ribosomal subunit. The cofactor is Zn(2+).

In terms of biological role, binds the 23S rRNA. The sequence is that of Large ribosomal subunit protein bL31 from Aliarcobacter butzleri (strain RM4018) (Arcobacter butzleri).